The following is a 287-amino-acid chain: ATP synthase gamma chain (287 aa).

Belongs to the ATPase gamma chain family. In terms of assembly, F-type ATPases have 2 components, CF(1) - the catalytic core - and CF(0) - the membrane proton channel. CF(1) has five subunits: alpha(3), beta(3), gamma(1), delta(1), epsilon(1). CF(0) has three main subunits: a, b and c.

The protein resides in the cell inner membrane. Produces ATP from ADP in the presence of a proton gradient across the membrane. The gamma chain is believed to be important in regulating ATPase activity and the flow of protons through the CF(0) complex. In Salmonella paratyphi A (strain ATCC 9150 / SARB42), this protein is ATP synthase gamma chain.